Consider the following 238-residue polypeptide: Orotidine 5'-phosphate decarboxylase (238 aa).

Residues aspartate 10, lysine 32, 59 to 68, threonine 122, arginine 184, glutamine 193, glycine 213, and arginine 214 contribute to the substrate site; that span reads DLKLHDIPNT. Lysine 61 acts as the Proton donor in catalysis.

This sequence belongs to the OMP decarboxylase family. Type 1 subfamily. Homodimer.

It catalyses the reaction orotidine 5'-phosphate + H(+) = UMP + CO2. It functions in the pathway pyrimidine metabolism; UMP biosynthesis via de novo pathway; UMP from orotate: step 2/2. Catalyzes the decarboxylation of orotidine 5'-monophosphate (OMP) to uridine 5'-monophosphate (UMP). This Bacillus cereus (strain Q1) protein is Orotidine 5'-phosphate decarboxylase.